The sequence spans 833 residues: F1 capsule-anchoring protein (833 aa).

An N-terminal signal peptide occupies residues 1–25 (MRYSKLFLCAGLTLATLPCWGRAYT). Cysteine 807 and cysteine 829 are joined by a disulfide.

This sequence belongs to the fimbrial export usher family.

The protein localises to the cell outer membrane. Its function is as follows. A probable role in capsular biogenesis. It is likely that the caf1A molecule binds F1 antigen subunits during the extracellular secretion process. This is F1 capsule-anchoring protein (caf1A) from Yersinia pestis.